Reading from the N-terminus, the 316-residue chain is 1-aminocyclopropane-1-carboxylate oxidase 4 (316 aa).

The region spanning 153–253 is the Fe2OG dioxygenase domain; it reads PNFGTKVSNY…RMSLASFYNP (101 aa). Fe cation-binding residues include H177, D179, and H234.

Belongs to the iron/ascorbate-dependent oxidoreductase family. Fe cation serves as cofactor. In terms of tissue distribution, expressed in all of the floral organs examined apart from the sepals.

It carries out the reaction 1-aminocyclopropane-1-carboxylate + L-ascorbate + O2 = ethene + L-dehydroascorbate + hydrogen cyanide + CO2 + 2 H2O. It functions in the pathway alkene biosynthesis; ethylene biosynthesis via S-adenosyl-L-methionine; ethylene from S-adenosyl-L-methionine: step 2/2. This chain is 1-aminocyclopropane-1-carboxylate oxidase 4 (ACO4), found in Solanum lycopersicum (Tomato).